A 64-amino-acid chain; its full sequence is DNA gyrase inhibitor YacG (64 aa).

4 residues coordinate Zn(2+): cysteine 9, cysteine 12, cysteine 28, and cysteine 32. The disordered stretch occupies residues 45–64 (KRIPSSGDLSESDDWSEEQK). The span at 54–64 (SESDDWSEEQK) shows a compositional bias: acidic residues.

It belongs to the DNA gyrase inhibitor YacG family. In terms of assembly, interacts with GyrB. Requires Zn(2+) as cofactor.

Its function is as follows. Inhibits all the catalytic activities of DNA gyrase by preventing its interaction with DNA. Acts by binding directly to the C-terminal domain of GyrB, which probably disrupts DNA binding by the gyrase. The sequence is that of DNA gyrase inhibitor YacG from Citrobacter koseri (strain ATCC BAA-895 / CDC 4225-83 / SGSC4696).